The following is a 311-amino-acid chain: Pyrimidine-specific ribonucleoside hydrolase RihA (311 aa).

The active site involves His-240.

Belongs to the IUNH family. RihA subfamily.

Hydrolyzes with equal efficiency cytidine or uridine to ribose and cytosine or uracil, respectively. The sequence is that of Pyrimidine-specific ribonucleoside hydrolase RihA from Escherichia coli O8 (strain IAI1).